The chain runs to 138 residues: Small ribosomal subunit protein uS9c (138 aa).

The protein belongs to the universal ribosomal protein uS9 family.

Its subcellular location is the plastid. The protein resides in the chloroplast. The polypeptide is Small ribosomal subunit protein uS9c (rps9) (Phaeodactylum tricornutum (strain CCAP 1055/1)).